The following is a 114-amino-acid chain: Flagellar hook-basal body complex protein FliE (114 aa).

It belongs to the FliE family.

It is found in the bacterial flagellum basal body. This Desulfitobacterium hafniense (strain DSM 10664 / DCB-2) protein is Flagellar hook-basal body complex protein FliE.